Here is a 156-residue protein sequence, read N- to C-terminus: MSKLLNKVFNFVGWEAVDEDEYEYDEQELNTKEEVKDEPIQTHFFNGSKKQQSGKVVNIHTGNQFKMIVSQPNTFDDAQDICDHLKNKKPVVINLEGIEKQDAQRIIDFLSGSVYALDGSIQKVSCDIFVIAPNNVDVSGDLKDELRNKTVFPWAK.

This sequence belongs to the SepF family. In terms of assembly, homodimer. Interacts with FtsZ.

The protein resides in the cytoplasm. Functionally, cell division protein that is part of the divisome complex and is recruited early to the Z-ring. Probably stimulates Z-ring formation, perhaps through the cross-linking of FtsZ protofilaments. Its function overlaps with FtsA. In Ruminiclostridium cellulolyticum (strain ATCC 35319 / DSM 5812 / JCM 6584 / H10) (Clostridium cellulolyticum), this protein is Cell division protein SepF.